The primary structure comprises 327 residues: L-lactate dehydrogenase 1 (327 aa).

NAD(+) is bound by residues Val-21, Asp-42, Lys-47, Tyr-72, and 86–87; that span reads GA. Residues Gln-89, Arg-95, and 127–130 each bind substrate; that span reads NPVD. NAD(+)-binding positions include 125–127 and Ser-150; that span reads AAN. 155–158 lines the substrate pocket; that stretch reads DSAR. Arg-160 and His-175 together coordinate beta-D-fructose 1,6-bisphosphate. His-182 serves as the catalytic Proton acceptor. The residue at position 227 (Tyr-227) is a Phosphotyrosine. Substrate is bound at residue Thr-236.

The protein belongs to the LDH/MDH superfamily. LDH family. As to quaternary structure, homotetramer.

It localises to the cytoplasm. It catalyses the reaction (S)-lactate + NAD(+) = pyruvate + NADH + H(+). It functions in the pathway fermentation; pyruvate fermentation to lactate; (S)-lactate from pyruvate: step 1/1. Its activity is regulated as follows. Allosterically activated by fructose 1,6-bisphosphate (FBP). Its function is as follows. Catalyzes the conversion of lactate to pyruvate. In Enterococcus faecalis (strain ATCC 700802 / V583), this protein is L-lactate dehydrogenase 1.